A 182-amino-acid chain; its full sequence is Nucleosome assembly protein 1-like 5 (182 aa).

The disordered stretch occupies residues methionine 1–glutamate 71. Composition is skewed to low complexity over residues glutamine 7 to alanine 21 and alanine 28 to glycine 49. A coiled-coil region spans residues valine 81 to lysine 107. Residues leucine 134 to lysine 182 are disordered. Acidic residues predominate over residues glutamate 135–alanine 160. The segment covering alanine 167–lysine 182 has biased composition (basic and acidic residues).

Belongs to the nucleosome assembly protein (NAP) family. In terms of tissue distribution, predominantly expressed in brain.

It localises to the nucleus. This is Nucleosome assembly protein 1-like 5 (NAP1L5) from Homo sapiens (Human).